The chain runs to 380 residues: Chaperone protein DnaJ (380 aa).

Positions 5-69 (DLYKVLGVEK…QKRAQYDQFG (65 aa)) constitute a J domain. The CR-type zinc finger occupies 140–222 (GKKTTITYNR…CGGSGHTEQS (83 aa)). Cys-153, Cys-156, Cys-170, Cys-173, Cys-196, Cys-199, Cys-210, and Cys-213 together coordinate Zn(2+). 4 CXXCXGXG motif repeats span residues 153–160 (CETCGGSG), 170–177 (CSKCHGAG), 196–203 (CDVCHGTG), and 210–217 (CATCGGSG).

Belongs to the DnaJ family. As to quaternary structure, homodimer. Zn(2+) serves as cofactor.

The protein localises to the cytoplasm. Its function is as follows. Participates actively in the response to hyperosmotic and heat shock by preventing the aggregation of stress-denatured proteins and by disaggregating proteins, also in an autonomous, DnaK-independent fashion. Unfolded proteins bind initially to DnaJ; upon interaction with the DnaJ-bound protein, DnaK hydrolyzes its bound ATP, resulting in the formation of a stable complex. GrpE releases ADP from DnaK; ATP binding to DnaK triggers the release of the substrate protein, thus completing the reaction cycle. Several rounds of ATP-dependent interactions between DnaJ, DnaK and GrpE are required for fully efficient folding. Also involved, together with DnaK and GrpE, in the DNA replication of plasmids through activation of initiation proteins. The chain is Chaperone protein DnaJ from Lactiplantibacillus plantarum (strain ATCC BAA-793 / NCIMB 8826 / WCFS1) (Lactobacillus plantarum).